A 329-amino-acid chain; its full sequence is 4-hydroxythreonine-4-phosphate dehydrogenase (329 aa).

2 residues coordinate substrate: histidine 136 and threonine 137. The a divalent metal cation site is built by histidine 166, histidine 211, and histidine 266. Residues lysine 274, asparagine 283, and arginine 292 each contribute to the substrate site.

The protein belongs to the PdxA family. As to quaternary structure, homodimer. Requires Zn(2+) as cofactor. Mg(2+) serves as cofactor. It depends on Co(2+) as a cofactor.

The protein localises to the cytoplasm. It catalyses the reaction 4-(phosphooxy)-L-threonine + NAD(+) = 3-amino-2-oxopropyl phosphate + CO2 + NADH. Its pathway is cofactor biosynthesis; pyridoxine 5'-phosphate biosynthesis; pyridoxine 5'-phosphate from D-erythrose 4-phosphate: step 4/5. Functionally, catalyzes the NAD(P)-dependent oxidation of 4-(phosphooxy)-L-threonine (HTP) into 2-amino-3-oxo-4-(phosphooxy)butyric acid which spontaneously decarboxylates to form 3-amino-2-oxopropyl phosphate (AHAP). The protein is 4-hydroxythreonine-4-phosphate dehydrogenase of Neisseria meningitidis serogroup B (strain ATCC BAA-335 / MC58).